The primary structure comprises 120 residues: Large ribosomal subunit protein bL12 (120 aa).

The protein belongs to the bacterial ribosomal protein bL12 family. Homodimer. Part of the ribosomal stalk of the 50S ribosomal subunit. Forms a multimeric L10(L12)X complex, where L10 forms an elongated spine to which 2 to 4 L12 dimers bind in a sequential fashion. Binds GTP-bound translation factors.

In terms of biological role, forms part of the ribosomal stalk which helps the ribosome interact with GTP-bound translation factors. Is thus essential for accurate translation. This is Large ribosomal subunit protein bL12 from Lactobacillus acidophilus (strain ATCC 700396 / NCK56 / N2 / NCFM).